Here is a 164-residue protein sequence, read N- to C-terminus: ATP synthase subunit b 1 (164 aa).

A helical membrane pass occupies residues 4-24 (MELAELWVAVAFFVFVGILLY).

It belongs to the ATPase B chain family. As to quaternary structure, F-type ATPases have 2 components, F(1) - the catalytic core - and F(0) - the membrane proton channel. F(1) has five subunits: alpha(3), beta(3), gamma(1), delta(1), epsilon(1). F(0) has three main subunits: a(1), b(2) and c(10-14). The alpha and beta chains form an alternating ring which encloses part of the gamma chain. F(1) is attached to F(0) by a central stalk formed by the gamma and epsilon chains, while a peripheral stalk is formed by the delta and b chains.

It is found in the cell inner membrane. F(1)F(0) ATP synthase produces ATP from ADP in the presence of a proton or sodium gradient. F-type ATPases consist of two structural domains, F(1) containing the extramembraneous catalytic core and F(0) containing the membrane proton channel, linked together by a central stalk and a peripheral stalk. During catalysis, ATP synthesis in the catalytic domain of F(1) is coupled via a rotary mechanism of the central stalk subunits to proton translocation. Its function is as follows. Component of the F(0) channel, it forms part of the peripheral stalk, linking F(1) to F(0). The chain is ATP synthase subunit b 1 from Azorhizobium caulinodans (strain ATCC 43989 / DSM 5975 / JCM 20966 / LMG 6465 / NBRC 14845 / NCIMB 13405 / ORS 571).